The following is a 134-amino-acid chain: Phosphoribosyl-AMP cyclohydrolase (134 aa).

Asp77 is a Mg(2+) binding site. Cys78 contacts Zn(2+). Mg(2+) contacts are provided by Asp79 and Asp81. Residues Cys95 and Cys102 each coordinate Zn(2+).

The protein belongs to the PRA-CH family. In terms of assembly, homodimer. It depends on Mg(2+) as a cofactor. Requires Zn(2+) as cofactor.

Its subcellular location is the cytoplasm. It catalyses the reaction 1-(5-phospho-beta-D-ribosyl)-5'-AMP + H2O = 1-(5-phospho-beta-D-ribosyl)-5-[(5-phospho-beta-D-ribosylamino)methylideneamino]imidazole-4-carboxamide. The protein operates within amino-acid biosynthesis; L-histidine biosynthesis; L-histidine from 5-phospho-alpha-D-ribose 1-diphosphate: step 3/9. Its function is as follows. Catalyzes the hydrolysis of the adenine ring of phosphoribosyl-AMP. The sequence is that of Phosphoribosyl-AMP cyclohydrolase from Pseudomonas aeruginosa (strain UCBPP-PA14).